Consider the following 229-residue polypeptide: Triosephosphate isomerase (229 aa).

Position 6–8 (6–8) interacts with substrate; it reads NLK. His-85 (electrophile) is an active-site residue. The active-site Proton acceptor is the Glu-152. Substrate-binding residues include Gly-158 and Ser-188.

The protein belongs to the triosephosphate isomerase family. Homodimer.

It is found in the cytoplasm. The catalysed reaction is D-glyceraldehyde 3-phosphate = dihydroxyacetone phosphate. It functions in the pathway carbohydrate biosynthesis; gluconeogenesis. Its pathway is carbohydrate degradation; glycolysis; D-glyceraldehyde 3-phosphate from glycerone phosphate: step 1/1. Involved in the gluconeogenesis. Catalyzes stereospecifically the conversion of dihydroxyacetone phosphate (DHAP) to D-glyceraldehyde-3-phosphate (G3P). This chain is Triosephosphate isomerase, found in Campylobacter curvus (strain 525.92).